The chain runs to 239 residues: Octanoyltransferase (239 aa).

Residues 48–236 enclose the BPL/LPL catalytic domain; it reads EGGDELVWLV…AFETVFGETV (189 aa). Substrate-binding positions include 87 to 94, 167 to 169, and 180 to 182; these read RGGEYTYH, ALG, and GLS. Catalysis depends on C198, which acts as the Acyl-thioester intermediate.

This sequence belongs to the LipB family.

It is found in the cytoplasm. It catalyses the reaction octanoyl-[ACP] + L-lysyl-[protein] = N(6)-octanoyl-L-lysyl-[protein] + holo-[ACP] + H(+). It participates in protein modification; protein lipoylation via endogenous pathway; protein N(6)-(lipoyl)lysine from octanoyl-[acyl-carrier-protein]: step 1/2. Functionally, catalyzes the transfer of endogenously produced octanoic acid from octanoyl-acyl-carrier-protein onto the lipoyl domains of lipoate-dependent enzymes. Lipoyl-ACP can also act as a substrate although octanoyl-ACP is likely to be the physiological substrate. The chain is Octanoyltransferase from Rhizobium etli (strain CIAT 652).